The primary structure comprises 487 residues: Bifunctional protein GlmU (487 aa).

The interval 1–235 is pyrophosphorylase; that stretch reads MSHSPTPLAA…PEEASGVNDR (235 aa). Residues 13 to 16, K27, Q82, 87 to 88, 110 to 112, G147, E162, N177, and N233 each bind UDP-N-acetyl-alpha-D-glucosamine; these read LAAG, GT, and SGD. Residue D112 coordinates Mg(2+). N233 serves as a coordination point for Mg(2+). Residues 236 to 256 are linker; the sequence is EELARAGRVLLRRRASELMRS. The N-acetyltransferase stretch occupies residues 257–487; the sequence is GVTIEDPERF…ADSPRGGRAS (231 aa). UDP-N-acetyl-alpha-D-glucosamine contacts are provided by R339 and K357. H369 (proton acceptor) is an active-site residue. 2 residues coordinate UDP-N-acetyl-alpha-D-glucosamine: Y372 and N383. Residues A386, 392-393, S411, A429, and R446 each bind acetyl-CoA; that span reads NY. A disordered region spans residues 453-487; that stretch reads EGWVARRKAEAQNKGAAEAAPAPSPADSPRGGRAS. Over residues 468–481 the composition is skewed to low complexity; sequence AAEAAPAPSPADSP.

It in the N-terminal section; belongs to the N-acetylglucosamine-1-phosphate uridyltransferase family. In the C-terminal section; belongs to the transferase hexapeptide repeat family. In terms of assembly, homotrimer. Requires Mg(2+) as cofactor.

It localises to the cytoplasm. The catalysed reaction is alpha-D-glucosamine 1-phosphate + acetyl-CoA = N-acetyl-alpha-D-glucosamine 1-phosphate + CoA + H(+). It catalyses the reaction N-acetyl-alpha-D-glucosamine 1-phosphate + UTP + H(+) = UDP-N-acetyl-alpha-D-glucosamine + diphosphate. It participates in nucleotide-sugar biosynthesis; UDP-N-acetyl-alpha-D-glucosamine biosynthesis; N-acetyl-alpha-D-glucosamine 1-phosphate from alpha-D-glucosamine 6-phosphate (route II): step 2/2. It functions in the pathway nucleotide-sugar biosynthesis; UDP-N-acetyl-alpha-D-glucosamine biosynthesis; UDP-N-acetyl-alpha-D-glucosamine from N-acetyl-alpha-D-glucosamine 1-phosphate: step 1/1. Its pathway is bacterial outer membrane biogenesis; LPS lipid A biosynthesis. Functionally, catalyzes the last two sequential reactions in the de novo biosynthetic pathway for UDP-N-acetylglucosamine (UDP-GlcNAc). The C-terminal domain catalyzes the transfer of acetyl group from acetyl coenzyme A to glucosamine-1-phosphate (GlcN-1-P) to produce N-acetylglucosamine-1-phosphate (GlcNAc-1-P), which is converted into UDP-GlcNAc by the transfer of uridine 5-monophosphate (from uridine 5-triphosphate), a reaction catalyzed by the N-terminal domain. This is Bifunctional protein GlmU from Anaeromyxobacter sp. (strain Fw109-5).